Here is a 313-residue protein sequence, read N- to C-terminus: Ribosomal RNA small subunit methyltransferase H (313 aa).

Residues 35-37 (GGH), aspartate 55, phenylalanine 80, aspartate 102, and glutamine 109 contribute to the S-adenosyl-L-methionine site.

This sequence belongs to the methyltransferase superfamily. RsmH family.

The protein resides in the cytoplasm. It carries out the reaction cytidine(1402) in 16S rRNA + S-adenosyl-L-methionine = N(4)-methylcytidine(1402) in 16S rRNA + S-adenosyl-L-homocysteine + H(+). Specifically methylates the N4 position of cytidine in position 1402 (C1402) of 16S rRNA. In Shewanella putrefaciens (strain CN-32 / ATCC BAA-453), this protein is Ribosomal RNA small subunit methyltransferase H.